The following is a 712-amino-acid chain: Phosphoribosylformylglycinamidine synthase subunit PurL (712 aa).

Histidine 32 is a catalytic residue. Tyrosine 35 provides a ligand contact to ATP. A Mg(2+)-binding site is contributed by glutamate 76. Substrate contacts are provided by residues 77-80 and arginine 99; that span reads SHNH. The active-site Proton acceptor is histidine 78. Position 100 (aspartate 100) interacts with Mg(2+). Glutamine 223 is a substrate binding site. Aspartate 251 lines the Mg(2+) pocket. 295 to 297 is a substrate binding site; that stretch reads ESQ. The ATP site is built by aspartate 470 and glycine 507. Asparagine 508 contacts Mg(2+). Serine 510 lines the substrate pocket.

Belongs to the FGAMS family. Monomer. Part of the FGAM synthase complex composed of 1 PurL, 1 PurQ and 2 PurS subunits.

It localises to the cytoplasm. It catalyses the reaction N(2)-formyl-N(1)-(5-phospho-beta-D-ribosyl)glycinamide + L-glutamine + ATP + H2O = 2-formamido-N(1)-(5-O-phospho-beta-D-ribosyl)acetamidine + L-glutamate + ADP + phosphate + H(+). The protein operates within purine metabolism; IMP biosynthesis via de novo pathway; 5-amino-1-(5-phospho-D-ribosyl)imidazole from N(2)-formyl-N(1)-(5-phospho-D-ribosyl)glycinamide: step 1/2. In terms of biological role, part of the phosphoribosylformylglycinamidine synthase complex involved in the purines biosynthetic pathway. Catalyzes the ATP-dependent conversion of formylglycinamide ribonucleotide (FGAR) and glutamine to yield formylglycinamidine ribonucleotide (FGAM) and glutamate. The FGAM synthase complex is composed of three subunits. PurQ produces an ammonia molecule by converting glutamine to glutamate. PurL transfers the ammonia molecule to FGAR to form FGAM in an ATP-dependent manner. PurS interacts with PurQ and PurL and is thought to assist in the transfer of the ammonia molecule from PurQ to PurL. This Thermococcus gammatolerans (strain DSM 15229 / JCM 11827 / EJ3) protein is Phosphoribosylformylglycinamidine synthase subunit PurL.